A 185-amino-acid polypeptide reads, in one-letter code: Intraflagellar transport protein 22 homolog (185 aa).

GTP is bound by residues 10 to 17, 63 to 67, and 123 to 126; these read GPCESGKT, DCGGD, and HKPG. Phosphoserine is present on serine 137.

It belongs to the small GTPase superfamily. Rab family. As to quaternary structure, component of the IFT complex B, at least composed of IFT20, IFT22, IFT25, IFT27, IFT46, IFT52, TRAF3IP1/IFT54, IFT57, IFT74, IFT80, IFT81, and IFT88. Interacts with IFT88. Interacts with CFAP61.

It localises to the cell projection. The protein localises to the cilium. Small GTPase-like component of the intraflagellar transport (IFT) complex B. In Mus musculus (Mouse), this protein is Intraflagellar transport protein 22 homolog (Ift22).